Reading from the N-terminus, the 178-residue chain is RNA pyrophosphohydrolase (178 aa).

The Nudix hydrolase domain occupies 18-171; the sequence is PYRPCVGLMV…KRKVYEQVVA (154 aa). The Nudix box motif lies at 59–80; the sequence is GGIDKGEDPAQAALRELYEETG.

This sequence belongs to the Nudix hydrolase family. RppH subfamily. Requires a divalent metal cation as cofactor.

In terms of biological role, accelerates the degradation of transcripts by removing pyrophosphate from the 5'-end of triphosphorylated RNA, leading to a more labile monophosphorylated state that can stimulate subsequent ribonuclease cleavage. This chain is RNA pyrophosphohydrolase, found in Brucella melitensis biotype 2 (strain ATCC 23457).